The sequence spans 72 residues: Putative membrane protein insertion efficiency factor (72 aa).

This sequence belongs to the UPF0161 family.

The protein localises to the cell inner membrane. In terms of biological role, could be involved in insertion of integral membrane proteins into the membrane. This Myxococcus xanthus (strain DK1622) protein is Putative membrane protein insertion efficiency factor.